Here is a 406-residue protein sequence, read N- to C-terminus: Dual-specificity RNA methyltransferase RlmN (406 aa).

Residue glutamate 119 is the Proton acceptor of the active site. Residues 125–370 (DKGRGTLCVS…AMVRRTRGDD (246 aa)) enclose the Radical SAM core domain. Cysteine 132 and cysteine 375 form a disulfide bridge. 3 residues coordinate [4Fe-4S] cluster: cysteine 139, cysteine 143, and cysteine 146. Residues 192-193 (GE), serine 224, 246-248 (SLH), and asparagine 332 contribute to the S-adenosyl-L-methionine site. The active-site S-methylcysteine intermediate is cysteine 375.

Belongs to the radical SAM superfamily. RlmN family. It depends on [4Fe-4S] cluster as a cofactor.

It localises to the cytoplasm. It carries out the reaction adenosine(2503) in 23S rRNA + 2 reduced [2Fe-2S]-[ferredoxin] + 2 S-adenosyl-L-methionine = 2-methyladenosine(2503) in 23S rRNA + 5'-deoxyadenosine + L-methionine + 2 oxidized [2Fe-2S]-[ferredoxin] + S-adenosyl-L-homocysteine. The enzyme catalyses adenosine(37) in tRNA + 2 reduced [2Fe-2S]-[ferredoxin] + 2 S-adenosyl-L-methionine = 2-methyladenosine(37) in tRNA + 5'-deoxyadenosine + L-methionine + 2 oxidized [2Fe-2S]-[ferredoxin] + S-adenosyl-L-homocysteine. Specifically methylates position 2 of adenine 2503 in 23S rRNA and position 2 of adenine 37 in tRNAs. m2A2503 modification seems to play a crucial role in the proofreading step occurring at the peptidyl transferase center and thus would serve to optimize ribosomal fidelity. In Xylella fastidiosa (strain Temecula1 / ATCC 700964), this protein is Dual-specificity RNA methyltransferase RlmN.